A 50-amino-acid polypeptide reads, in one-letter code: Large ribosomal subunit protein bL33B (50 aa).

This sequence belongs to the bacterial ribosomal protein bL33 family.

In Mycoplasmopsis agalactiae (strain NCTC 10123 / CIP 59.7 / PG2) (Mycoplasma agalactiae), this protein is Large ribosomal subunit protein bL33B.